Reading from the N-terminus, the 73-residue chain is Beta-defensin 50 (73 aa).

The N-terminal stretch at 1–23 is a signal peptide; sequence MKTLHLLLLISGLLSVFVKGVGS. Disulfide bonds link Cys-34–Cys-63 and Cys-46–Cys-64.

Belongs to the beta-defensin family.

It is found in the secreted. In terms of biological role, has bactericidal activity. The sequence is that of Beta-defensin 50 (Defb50) from Rattus norvegicus (Rat).